Here is a 531-residue protein sequence, read N- to C-terminus: Pyruvate kinase (531 aa).

Residue R86 participates in substrate binding. Positions 88, 90, 121, and 122 each coordinate K(+). ATP is bound at residue 88-91 (NFSH). ATP-binding residues include R128 and K211. E277 is a Mg(2+) binding site. Substrate contacts are provided by G300, D301, and T333. D301 is a binding site for Mg(2+).

This sequence belongs to the pyruvate kinase family. Homotetramer. Mg(2+) serves as cofactor. It depends on K(+) as a cofactor.

It carries out the reaction pyruvate + ATP = phosphoenolpyruvate + ADP + H(+). Its pathway is carbohydrate degradation; glycolysis; pyruvate from D-glyceraldehyde 3-phosphate: step 5/5. In Eimeria tenella (Coccidian parasite), this protein is Pyruvate kinase (PYK).